A 607-amino-acid chain; its full sequence is Threonine--tRNA ligase (607 aa).

Residues 200 to 502 are catalytic; that stretch reads DHRKLGRELG…LIEEYAGDFP (303 aa). Zn(2+) is bound by residues cysteine 299, histidine 350, and histidine 479.

The protein belongs to the class-II aminoacyl-tRNA synthetase family. In terms of assembly, homodimer. Zn(2+) is required as a cofactor.

It is found in the cytoplasm. It carries out the reaction tRNA(Thr) + L-threonine + ATP = L-threonyl-tRNA(Thr) + AMP + diphosphate + H(+). Functionally, catalyzes the attachment of threonine to tRNA(Thr) in a two-step reaction: L-threonine is first activated by ATP to form Thr-AMP and then transferred to the acceptor end of tRNA(Thr). Also edits incorrectly charged L-seryl-tRNA(Thr). The sequence is that of Threonine--tRNA ligase from Synechococcus sp. (strain ATCC 27144 / PCC 6301 / SAUG 1402/1) (Anacystis nidulans).